We begin with the raw amino-acid sequence, 430 residues long: Dihydrolipoyllysine-residue acetyltransferase component of pyruvate dehydrogenase complex (430 aa).

The Lipoyl-binding domain maps to 2–77 (AFEFRLPDIG…VVGDVIVKID (76 aa)). The residue at position 43 (Lys-43) is an N6-lipoyllysine. The interval 80 to 122 (DAEDMQFKGHDDDSSSKEEPAKEEAPAEQAPVATQTEEVDENR) is disordered. The segment covering 84 to 104 (MQFKGHDDDSSSKEEPAKEEA) has biased composition (basic and acidic residues). In terms of domain architecture, Peripheral subunit-binding (PSBD) spans 125–162 (KAMPSVRKYAREKGVNIKAVSGSGKNGRITKEDVDAYL). The disordered stretch occupies residues 165–199 (GAPTASNESAASATNEEVAETPAAPAAVSLEGDFP). A compositionally biased stretch (low complexity) spans 168-192 (TASNESAASATNEEVAETPAAPAAV). The active site involves His-401.

Belongs to the 2-oxoacid dehydrogenase family. In terms of assembly, forms a 24-polypeptide structural core with octahedral symmetry. (R)-lipoate serves as cofactor.

The enzyme catalyses N(6)-[(R)-dihydrolipoyl]-L-lysyl-[protein] + acetyl-CoA = N(6)-[(R)-S(8)-acetyldihydrolipoyl]-L-lysyl-[protein] + CoA. Its function is as follows. The pyruvate dehydrogenase complex catalyzes the overall conversion of pyruvate to acetyl-CoA and CO(2). It contains multiple copies of three enzymatic components: pyruvate dehydrogenase (E1), dihydrolipoamide acetyltransferase (E2) and lipoamide dehydrogenase (E3). The sequence is that of Dihydrolipoyllysine-residue acetyltransferase component of pyruvate dehydrogenase complex (pdhC) from Staphylococcus aureus (strain MRSA252).